We begin with the raw amino-acid sequence, 515 residues long: Maturase K (515 aa).

Belongs to the intron maturase 2 family. MatK subfamily.

It is found in the plastid. It localises to the chloroplast. Usually encoded in the trnK tRNA gene intron. Probably assists in splicing its own and other chloroplast group II introns. The chain is Maturase K from Pinus koraiensis (Korean pine).